A 250-amino-acid polypeptide reads, in one-letter code: uncharacterized protein (250 aa).

Positions 1–19 are cleaved as a signal peptide; sequence MAKPRNAAESKAAKAQANA. 2 helical membrane passes run 51–71 and 73–93; these read IGAFLLIVGASVGVGVWAGGF and MFTMIPLGVLLGALVAFVIFG. The tract at residues 226 to 250 is disordered; it reads AGVMPKGPLPTTAKMRSVQRTVRRK.

Its subcellular location is the cell membrane. This is an uncharacterized protein from Mycobacterium tuberculosis (strain CDC 1551 / Oshkosh).